The sequence spans 382 residues: Methylthioribose-1-phosphate isomerase (382 aa).

Asp-258 (proton donor) is an active-site residue.

It belongs to the eIF-2B alpha/beta/delta subunits family. MtnA subfamily.

The protein resides in the cytoplasm. Its subcellular location is the nucleus. The catalysed reaction is 5-(methylsulfanyl)-alpha-D-ribose 1-phosphate = 5-(methylsulfanyl)-D-ribulose 1-phosphate. It participates in amino-acid biosynthesis; L-methionine biosynthesis via salvage pathway; L-methionine from S-methyl-5-thio-alpha-D-ribose 1-phosphate: step 1/6. Functionally, catalyzes the interconversion of methylthioribose-1-phosphate (MTR-1-P) into methylthioribulose-1-phosphate (MTRu-1-P). In Laccaria bicolor (strain S238N-H82 / ATCC MYA-4686) (Bicoloured deceiver), this protein is Methylthioribose-1-phosphate isomerase.